The following is a 363-amino-acid chain: MKFNPFLEAIKTYESGKDMDLVAKEYGLKEVIKLASNENPYGTSKKAKEAIINNAHLAHLYPDDTMSELKQALAQKYDILKENLIIGSGSDQIIEYIVHAKLDHSKAYLQCGVSFAMYEIYAKQLGVKVYKTPSLTHDLNELYELYQKHKNEIKVIFLCLPNNPLGECLDASAVFEFLEKIDEDCLVAIDGAYNEFASFKDSKKHINPKELIHKFQNAVYLGTFSKLYGLGGMRVGYGIACKEIINAFYKLRAPFNVTNLSLKAAVAALDDDEFVQKTLENNFSQMKLYEDFAKNYKIRYIPSYTNFITYFFDEKNSTDLSEKLLKNGIIIRNLQSYGLNAVRISIGTEYENSRFFEEFSKNF.

At Lys-226 the chain carries N6-(pyridoxal phosphate)lysine.

This sequence belongs to the class-II pyridoxal-phosphate-dependent aminotransferase family. Histidinol-phosphate aminotransferase subfamily. Homodimer. Pyridoxal 5'-phosphate is required as a cofactor.

The catalysed reaction is L-histidinol phosphate + 2-oxoglutarate = 3-(imidazol-4-yl)-2-oxopropyl phosphate + L-glutamate. It participates in amino-acid biosynthesis; L-histidine biosynthesis; L-histidine from 5-phospho-alpha-D-ribose 1-diphosphate: step 7/9. The polypeptide is Histidinol-phosphate aminotransferase (Campylobacter lari (strain RM2100 / D67 / ATCC BAA-1060)).